Here is a 431-residue protein sequence, read N- to C-terminus: Mevalonate kinase (431 aa).

ATP contacts are provided by residues K13, S139, and G144–S150. Residues S150 and E198 each contribute to the Mg(2+) site. The active-site Proton acceptor is D209.

Belongs to the GHMP kinase family. Mevalonate kinase subfamily. Homodimer.

Its subcellular location is the cytoplasm. The protein localises to the cytosol. It catalyses the reaction (R)-mevalonate + ATP = (R)-5-phosphomevalonate + ADP + H(+). The protein operates within isoprenoid biosynthesis; isopentenyl diphosphate biosynthesis via mevalonate pathway; isopentenyl diphosphate from (R)-mevalonate: step 1/3. Its function is as follows. Mevalonate kinase; part of the second module of ergosterol biosynthesis pathway that includes the middle steps of the pathway. ERG12 converts mevalonate into 5-phosphomevalonate. The second module is carried out in the vacuole and involves the formation of farnesyl diphosphate, which is also an important intermediate in the biosynthesis of ubiquinone, dolichol, heme and prenylated proteins. Activity by the mevalonate kinase ERG12 first converts mevalonate into 5-phosphomevalonate. 5-phosphomevalonate is then further converted to 5-diphosphomevalonate by the phosphomevalonate kinase ERG8. The diphosphomevalonate decarboxylase MVD then produces isopentenyl diphosphate. The isopentenyl-diphosphate delta-isomerase IDI1 then catalyzes the 1,3-allylic rearrangement of the homoallylic substrate isopentenyl (IPP) to its highly electrophilic allylic isomer, dimethylallyl diphosphate (DMAPP). Finally the farnesyl diphosphate synthase ERG20 catalyzes the sequential condensation of isopentenyl pyrophosphate with dimethylallyl pyrophosphate, and then with the resultant geranylpyrophosphate to the ultimate product farnesyl pyrophosphate. In Candida albicans (strain SC5314 / ATCC MYA-2876) (Yeast), this protein is Mevalonate kinase.